A 348-amino-acid polypeptide reads, in one-letter code: Succinylglutamate desuccinylase (348 aa).

Positions 64, 67, and 164 each coordinate Zn(2+). Residue E228 is part of the active site.

It belongs to the AspA/AstE family. Succinylglutamate desuccinylase subfamily. It depends on Zn(2+) as a cofactor.

The catalysed reaction is N-succinyl-L-glutamate + H2O = L-glutamate + succinate. It functions in the pathway amino-acid degradation; L-arginine degradation via AST pathway; L-glutamate and succinate from L-arginine: step 5/5. Its function is as follows. Transforms N(2)-succinylglutamate into succinate and glutamate. The chain is Succinylglutamate desuccinylase from Shewanella amazonensis (strain ATCC BAA-1098 / SB2B).